A 276-amino-acid chain; its full sequence is Urease accessory protein UreD (276 aa).

The protein belongs to the UreD family. In terms of assembly, ureD, UreF and UreG form a complex that acts as a GTP-hydrolysis-dependent molecular chaperone, activating the urease apoprotein by helping to assemble the nickel containing metallocenter of UreC. The UreE protein probably delivers the nickel.

It is found in the cytoplasm. In terms of biological role, required for maturation of urease via the functional incorporation of the urease nickel metallocenter. This is Urease accessory protein UreD from Albidiferax ferrireducens (strain ATCC BAA-621 / DSM 15236 / T118) (Rhodoferax ferrireducens).